A 234-amino-acid chain; its full sequence is Ubiquitin domain-containing protein 2 (234 aa).

The interval 1-46 (MGGCVGAQHDSSGSLNENSDGTGVALGRNQPLKKEKPKWKSDYPMT) is disordered. Polar residues predominate over residues 9–21 (HDSSGSLNENSDG). Basic and acidic residues predominate over residues 32-41 (LKKEKPKWKS). The region spanning 152–227 (SQLRLRLSTG…VQVIVSQPVQ (76 aa)) is the Ubiquitin-like domain.

The protein resides in the cytoplasm. The protein is Ubiquitin domain-containing protein 2 (Ubtd2) of Mus musculus (Mouse).